A 201-amino-acid polypeptide reads, in one-letter code: Probable molybdenum cofactor guanylyltransferase (201 aa).

Residues 6-8, Lys-18, Asp-65, and Asp-97 each bind GTP; that span reads LAG. Asp-97 provides a ligand contact to Mg(2+).

Belongs to the MobA family. Mg(2+) serves as cofactor.

The protein resides in the cytoplasm. It carries out the reaction Mo-molybdopterin + GTP + H(+) = Mo-molybdopterin guanine dinucleotide + diphosphate. Functionally, transfers a GMP moiety from GTP to Mo-molybdopterin (Mo-MPT) cofactor (Moco or molybdenum cofactor) to form Mo-molybdopterin guanine dinucleotide (Mo-MGD) cofactor. The polypeptide is Probable molybdenum cofactor guanylyltransferase (Staphylococcus epidermidis (strain ATCC 35984 / DSM 28319 / BCRC 17069 / CCUG 31568 / BM 3577 / RP62A)).